A 511-amino-acid polypeptide reads, in one-letter code: Membrane-bound lytic murein transglycosylase F (511 aa).

An N-terminal signal peptide occupies residues M1–A19. Residues A20–G269 form a non-LT domain region. The interval N270–Y511 is LT domain. The active site involves E314.

It in the N-terminal section; belongs to the bacterial solute-binding protein 3 family. The protein in the C-terminal section; belongs to the transglycosylase Slt family.

It is found in the cell outer membrane. It carries out the reaction Exolytic cleavage of the (1-&gt;4)-beta-glycosidic linkage between N-acetylmuramic acid (MurNAc) and N-acetylglucosamine (GlcNAc) residues in peptidoglycan, from either the reducing or the non-reducing ends of the peptidoglycan chains, with concomitant formation of a 1,6-anhydrobond in the MurNAc residue.. Functionally, murein-degrading enzyme that degrades murein glycan strands and insoluble, high-molecular weight murein sacculi, with the concomitant formation of a 1,6-anhydromuramoyl product. Lytic transglycosylases (LTs) play an integral role in the metabolism of the peptidoglycan (PG) sacculus. Their lytic action creates space within the PG sacculus to allow for its expansion as well as for the insertion of various structures such as secretion systems and flagella. The protein is Membrane-bound lytic murein transglycosylase F of Klebsiella pneumoniae subsp. pneumoniae (strain ATCC 700721 / MGH 78578).